The sequence spans 437 residues: Protein WVD2-like 5 (437 aa).

3 disordered regions span residues 1 to 22 (MDPESIMAADGTDSAPANGGLA), 38 to 210 (TVDT…FSFK), and 254 to 437 (LRKS…AVEH). Low complexity predominate over residues 41 to 55 (TTSESQNENSANSST). Basic and acidic residues predominate over residues 58–86 (TIEHVKEAAEGTQVEHVDDSKCMKGEKAQ). Polar residues predominate over residues 121 to 140 (SNGSVAPNVQTTNPLKSKSF). Over residues 151–167 (GKHDSAPAESADGEKVK) the composition is skewed to basic and acidic residues. S208 bears the Phosphoserine mark. Residues 288–297 (KSPKLGRKKT) show a composition bias toward basic residues. Residues 360–371 (PAPAKAAIIPAK) show a composition bias toward low complexity. Positions 408-437 (EDSHETVSPRMNEDRADKSIEVSEAVAVEH) are enriched in basic and acidic residues. S415 carries the post-translational modification Phosphoserine.

This sequence belongs to the TPX2 family. As to expression, expressed in seedlings.

Its subcellular location is the cytoplasm. It is found in the cytoskeleton. Its function is as follows. Microtubule-associated protein (MAP) that regulates the orientation of interphase cortical microtubules. This Arabidopsis thaliana (Mouse-ear cress) protein is Protein WVD2-like 5.